The chain runs to 376 residues: Succinyl-diaminopimelate desuccinylase (376 aa).

His-67 is a binding site for Zn(2+). Residue Asp-69 is part of the active site. Asp-100 contributes to the Zn(2+) binding site. The Proton acceptor role is filled by Glu-134. Glu-135, Glu-163, and His-349 together coordinate Zn(2+).

It belongs to the peptidase M20A family. DapE subfamily. As to quaternary structure, homodimer. Zn(2+) serves as cofactor. The cofactor is Co(2+).

The enzyme catalyses N-succinyl-(2S,6S)-2,6-diaminopimelate + H2O = (2S,6S)-2,6-diaminopimelate + succinate. It functions in the pathway amino-acid biosynthesis; L-lysine biosynthesis via DAP pathway; LL-2,6-diaminopimelate from (S)-tetrahydrodipicolinate (succinylase route): step 3/3. Catalyzes the hydrolysis of N-succinyl-L,L-diaminopimelic acid (SDAP), forming succinate and LL-2,6-diaminopimelate (DAP), an intermediate involved in the bacterial biosynthesis of lysine and meso-diaminopimelic acid, an essential component of bacterial cell walls. This chain is Succinyl-diaminopimelate desuccinylase, found in Xanthomonas campestris pv. campestris (strain B100).